A 624-amino-acid polypeptide reads, in one-letter code: MKNCIAAIPEVKEMVEKAKLKGIETPHTRFPNQFPKCPYGLKGVYCILCANGPCRITEKTPYGVCGATADVIVARNLCRAVAAGTSCYVHCAENAARALLSAGKGEGSYEIRNEKKLKFLAKKLGFDANKDAKQLAVEVAEFILDDMYKPRWEKSELVPKLCPEKRLEVFEKLDILPGGAKGEIVDALTKTSTNLNSNPMDLLVHCLRLGLHAGFTGLLMTCWLNDILFGSPKITVVENGFSSVKPNNVNIMITGHQHALIQPLCEAAMEEDLIKMAKEAGADEIKIIGATCNGQDMETRIAHLPESFVGYIANNFTTEPLVATGLIDAVVSEFNCTFHGLKFVAEKTKTKLICIDDMAYVEGAEYIPWEPENAKEKAREIIKKAIEAFKERKGMQKDYYDEKVKSVVGVGEESLVEFLGGSVKPLIELIASGKIKGVVGVVGCSNLASGGHDNIIVTLTKELIKRDILVLAGGCVNSPLKHAGLFDPASAELAGENLKEVCKSLGIPPVLNFGACLSIARIEQVAVAIAEELGVDIPDLPVAASAPQWLEEQALADATYAVDMGFTVHVSPVPFVTGSELVTKVLTEAVEGLTGGKLIPEPNPYKAADLLEQTIMEKRKKLGI.

Residues C37, C46, C49, C54, and C65 each contribute to the [4Fe-4S] cluster site. Residues H256, C292, C336, C444, C475, and C516 each coordinate [Ni-4Fe-5S] cluster.

It belongs to the Ni-containing carbon monoxide dehydrogenase family. In terms of assembly, homodimer. It depends on [4Fe-4S] cluster as a cofactor. Requires [Ni-4Fe-5S] cluster as cofactor.

It catalyses the reaction CO + 2 oxidized [2Fe-2S]-[ferredoxin] + H2O = 2 reduced [2Fe-2S]-[ferredoxin] + CO2 + 2 H(+). Functionally, CODH oxidizes carbon monoxide coupled, via CooF, to the reduction of a hydrogen cation by a hydrogenase (possibly CooH). The sequence is that of Carbon monoxide dehydrogenase (cooS) from Methanocaldococcus jannaschii (strain ATCC 43067 / DSM 2661 / JAL-1 / JCM 10045 / NBRC 100440) (Methanococcus jannaschii).